Here is a 439-residue protein sequence, read N- to C-terminus: MVDIIKTNATFKAGKGNKGTLSFEIPAKQISSGIDQAFNKQKDKINIPGFRKGHVSKELFLARFGEEALYEDALNAILPDIYDQAVNEADITVVGQPQIIPDDLKHGGPWKIHAEVTLAPTVELGDYKGVEVEKESDEVSDKELNAELERLQKGEAELVPAKEDQVSEKGDTVVIDFDGSVDGKQFDGGKAQNFSLSLGSGQFIPGFEDQLVGHKAGDDVDVKVTFPKNYQAKNLAGKEAVFAVTIHELKKLETPALDNEFAKDVDDSVSSLEELKAKTKEKLAKDKAEKNKDAFEDAAIQKVVDGAKINPEKLPEEMINDDVSRQMQTFFNNLAGQGVKPEMYFQITGTSQEQLKQQMTEGAPNRVKTNLVLEEIARVEKINPSNEEIDKEIKSLASEYNIKESEVEKSVSAGMLSHDLKVQQAVELIVNSAQAVEKK.

Residues glycine 170 to proline 255 form the PPIase FKBP-type domain.

It belongs to the FKBP-type PPIase family. Tig subfamily.

The protein localises to the cytoplasm. It catalyses the reaction [protein]-peptidylproline (omega=180) = [protein]-peptidylproline (omega=0). Its function is as follows. Involved in protein export. Acts as a chaperone by maintaining the newly synthesized protein in an open conformation. Functions as a peptidyl-prolyl cis-trans isomerase. In Oenococcus oeni (strain ATCC BAA-331 / PSU-1), this protein is Trigger factor.